Reading from the N-terminus, the 210-residue chain is MDDEEETYRLWKIRKTIMQLCHDRGYLVTQDELDQTLEEFRAQFGDKPSEGRPRRTDLTVLVAHNDDPTDQMFVFFPEEPKVGIKTIKVYCQRMQEENITRALIVVQQGMTPSAKQSLVDMAPKYILEQFLQQELLINITEHELVPEHVVMTKEEVTELLARYKLRENQLPRIQAGDPVARYFGIKRGQVVKIIRPSETAGRYITYRLVQ.

The residue at position 1 (methionine 1) is an N-acetylmethionine. Residue lysine 81 forms a Glycyl lysine isopeptide (Lys-Gly) (interchain with G-Cter in SUMO2) linkage.

The protein belongs to the archaeal Rpo5/eukaryotic RPB5 RNA polymerase subunit family. As to quaternary structure, component of the RNA polymerase I (Pol I), RNA polymerase II (Pol II) and RNA polymerase III (Pol III) complexes consisting of at least 13, 12 and 17 subunits, respectively. Pol I complex consists of a ten-subunit catalytic core composed of POLR1A/RPA1, POLR1B/RPA2, POLR1C/RPAC1, POLR1D/RPAC2, POLR1H/RPA12, POLR2E/RPABC1, POLR2F/RPABC2, POLR2H/RPABC3, POLR2K/RPABC4 and POLR2L/RPABC5; a mobile stalk subunit POLR1F/RPA43 protruding from the core and additional subunits homologous to general transcription factors POLR1E/RPA49 and POLR1G/RPA34. Part of Pol I pre-initiation complex (PIC), in which Pol I core assembles with RRN3 and promoter-bound UTBF and SL1/TIF-IB complex. Pol II complex contains a ten-subunit catalytic core composed of POLR2A/RPB1, POLR2B/RPB2, POLR2C/RPB3, POLR2I/RPB9, POLR2J/RPB11, POLR2E/RPABC1, POLR2F/RPABC2, POLR2H/RPABC3, POLR2K/RPABC4 and POLR2L/RPABC5 and a mobile stalk composed of two subunits POLR2D/RPB4 and POLR2G/RPB7. Part of Pol II(G) complex, in which Pol II core associates with an additional subunit POLR2M; unlike conventional Pol II, Pol II(G) functions as a transcriptional repressor. Part of TBP-based Pol II pre-initiation complex (PIC), in which Pol II core assembles with general transcription factors and other specific initiation factors including GTF2E1, GTF2E2, GTF2F1, GTF2F2, TCEA1, ERCC2, ERCC3, GTF2H2, GTF2H3, GTF2H4, GTF2H5, GTF2A1, GTF2A2, GTF2B and TBP; this large multi-subunit PIC complex mediates DNA unwinding and targets Pol II core to the transcription start site where the first phosphodiester bond forms. In Pol II complex, this subunit is present in 2-fold molar excess over the other subunits. Pol III complex consists of a ten-subunit catalytic core composed of POLR3A/RPC1, POLR3B/RPC2, POLR1C/RPAC1, POLR1D/RPAC2, POLR3K/RPC10, POLR2E/RPABC1, POLR2F/RPABC2, POLR2H/RPABC3, POLR2K/RPABC4 and POLR2L/RPABC5; a mobile stalk composed of two subunits POLR3H/RPC8 and CRCP/RPC9, protruding from the core and functioning primarily in transcription initiation; and additional subunits homologous to general transcription factors of the RNA polymerase II machinery, POLR3C/RPC3-POLR3F/RPC6-POLR3G/RPC7 heterotrimer required for transcription initiation and POLR3D/RPC4-POLR3E/RPC5 heterodimer involved in both transcription initiation and termination. Component of the PAQosome complex which is responsible for the biogenesis of several protein complexes and which consists of R2TP complex members RUVBL1, RUVBL2, RPAP3 and PIH1D1, URI complex members PFDN2, PFDN6, PDRG1, UXT and URI1 as well as ASDURF, POLR2E and DNAAF10/WDR92. Interacts with URI1.

The protein resides in the nucleus. It is found in the nucleolus. Functionally, DNA-dependent RNA polymerase catalyzes the transcription of DNA into RNA using the four ribonucleoside triphosphates as substrates. Common component of RNA polymerases I, II and III which synthesize ribosomal RNA precursors, mRNA precursors and many functional non-coding RNAs, and small RNAs, such as 5S rRNA and tRNAs, respectively. Pol II is the central component of the basal RNA polymerase II transcription machinery. Pols are composed of mobile elements that move relative to each other. In Pol II, POLR2E/RPABC1 is part of the lower jaw surrounding the central large cleft and thought to grab the incoming DNA template. Seems to be the major component in this process. This Pongo abelii (Sumatran orangutan) protein is DNA-directed RNA polymerases I, II, and III subunit RPABC1 (POLR2E).